We begin with the raw amino-acid sequence, 147 residues long: Large ribosomal subunit protein bL9 (147 aa).

Belongs to the bacterial ribosomal protein bL9 family.

In terms of biological role, binds to the 23S rRNA. This Caldanaerobacter subterraneus subsp. tengcongensis (strain DSM 15242 / JCM 11007 / NBRC 100824 / MB4) (Thermoanaerobacter tengcongensis) protein is Large ribosomal subunit protein bL9.